The following is a 258-amino-acid chain: Phosphate import ATP-binding protein PstB (258 aa).

The ABC transporter domain maps to I5–Q247. An ATP-binding site is contributed by G37–S44.

It belongs to the ABC transporter superfamily. Phosphate importer (TC 3.A.1.7) family. The complex is composed of two ATP-binding proteins (PstB), two transmembrane proteins (PstC and PstA) and a solute-binding protein (PstS).

It localises to the cell membrane. The enzyme catalyses phosphate(out) + ATP + H2O = ADP + 2 phosphate(in) + H(+). Functionally, part of the ABC transporter complex PstSACB involved in phosphate import. Responsible for energy coupling to the transport system. This chain is Phosphate import ATP-binding protein PstB, found in Streptomyces griseus.